Consider the following 151-residue polypeptide: Cytochrome c oxidase-assembly factor COX23, mitochondrial (151 aa).

Residues Met-1–Gln-10 constitute a mitochondrion transit peptide. The interval Met-1–Pro-86 is disordered. Residues Thr-7–Ser-18 are compositionally biased toward polar residues. Over residues Asn-19–Pro-51 the composition is skewed to low complexity. The 43-residue stretch at Tyr-101–Arg-143 folds into the CHCH domain. 2 short sequence motifs (cx9C motif) span residues Cys-104 to Cys-114 and Cys-125 to Cys-135. 2 disulfide bridges follow: Cys-104–Cys-135 and Cys-114–Cys-125.

This sequence belongs to the COX23 family.

It localises to the cytoplasm. The protein resides in the mitochondrion intermembrane space. Functionally, required for the assembly of cytochrome c oxidase. The protein is Cytochrome c oxidase-assembly factor COX23, mitochondrial (COX23) of Saccharomyces cerevisiae (strain ATCC 204508 / S288c) (Baker's yeast).